The primary structure comprises 116 residues: Ribosome-binding factor A (116 aa).

It belongs to the RbfA family. Monomer. Binds 30S ribosomal subunits, but not 50S ribosomal subunits or 70S ribosomes.

Its subcellular location is the cytoplasm. Functionally, one of several proteins that assist in the late maturation steps of the functional core of the 30S ribosomal subunit. Associates with free 30S ribosomal subunits (but not with 30S subunits that are part of 70S ribosomes or polysomes). Required for efficient processing of 16S rRNA. May interact with the 5'-terminal helix region of 16S rRNA. The chain is Ribosome-binding factor A from Staphylococcus epidermidis (strain ATCC 35984 / DSM 28319 / BCRC 17069 / CCUG 31568 / BM 3577 / RP62A).